The chain runs to 494 residues: Probable malate:quinone oxidoreductase (494 aa).

Belongs to the MQO family. The cofactor is FAD.

It carries out the reaction (S)-malate + a quinone = a quinol + oxaloacetate. The protein operates within carbohydrate metabolism; tricarboxylic acid cycle; oxaloacetate from (S)-malate (quinone route): step 1/1. The polypeptide is Probable malate:quinone oxidoreductase (Kocuria rhizophila (strain ATCC 9341 / DSM 348 / NBRC 103217 / DC2201)).